Here is a 356-residue protein sequence, read N- to C-terminus: S-adenosylmethionine:tRNA ribosyltransferase-isomerase (356 aa).

The protein belongs to the QueA family. As to quaternary structure, monomer.

The protein resides in the cytoplasm. It catalyses the reaction 7-aminomethyl-7-carbaguanosine(34) in tRNA + S-adenosyl-L-methionine = epoxyqueuosine(34) in tRNA + adenine + L-methionine + 2 H(+). It functions in the pathway tRNA modification; tRNA-queuosine biosynthesis. Functionally, transfers and isomerizes the ribose moiety from AdoMet to the 7-aminomethyl group of 7-deazaguanine (preQ1-tRNA) to give epoxyqueuosine (oQ-tRNA). The polypeptide is S-adenosylmethionine:tRNA ribosyltransferase-isomerase (Histophilus somni (strain 2336) (Haemophilus somnus)).